The following is a 393-amino-acid chain: S-adenosylmethionine synthase 3 (393 aa).

Glu9 contacts Mg(2+). An ATP-binding site is contributed by His15. Glu43 serves as a coordination point for K(+). Residues Glu56 and Gln99 each coordinate L-methionine. ATP contacts are provided by residues 167–169 (NGK), 235–238 (SGRF), Asp246, 252–253 (RK), Ala269, Lys273, and Lys277. Position 246 (Asp246) interacts with L-methionine. Lys277 serves as a coordination point for L-methionine.

Belongs to the AdoMet synthase family. Homotetramer. Mn(2+) serves as cofactor. Requires Mg(2+) as cofactor. It depends on Co(2+) as a cofactor. The cofactor is K(+). As to expression, mostly expressed in flowers, seedpods and roots, and, to a lower extent, in stems and leaves.

The protein resides in the cytoplasm. The catalysed reaction is L-methionine + ATP + H2O = S-adenosyl-L-methionine + phosphate + diphosphate. The protein operates within amino-acid biosynthesis; S-adenosyl-L-methionine biosynthesis; S-adenosyl-L-methionine from L-methionine: step 1/1. Its function is as follows. Catalyzes the formation of S-adenosylmethionine from methionine and ATP. The reaction comprises two steps that are both catalyzed by the same enzyme: formation of S-adenosylmethionine (AdoMet) and triphosphate, and subsequent hydrolysis of the triphosphate. This chain is S-adenosylmethionine synthase 3 (MSAMS3), found in Brassica juncea (Indian mustard).